The sequence spans 313 residues: uncharacterized protein (313 aa).

Transmembrane regions (helical) follow at residues 41 to 61 (LAGT…GLMV), 68 to 88 (VHSV…FHYF), and 102 to 122 (QLLL…KLVL).

This sequence belongs to the cytochrome b family.

Its subcellular location is the mitochondrion membrane. This is an uncharacterized protein from Arabidopsis thaliana (Mouse-ear cress).